Consider the following 698-residue polypeptide: Trafficking protein particle complex III-specific subunit 85 (698 aa).

Disordered stretches follow at residues 82–125 (VGQH…LFQR) and 678–698 (VDSAPRPSEKNLTRTSVSFIG). The segment covering 678-689 (VDSAPRPSEKNL) has biased composition (basic and acidic residues).

Belongs to the TRS85 family. In terms of assembly, part of the multisubunit TRAPP (transport protein particle) III complex composed of BET3, BET5, TRS20, TRS23, TRS31, TRS33 and TRS85.

It is found in the preautophagosomal structure. Functionally, specific subunit of the TRAPP III complex that acts as an autophagy-specific guanine nucleotide exchange factor (GEF) for YPT1. TRS85 directs the TRAPP III complex to the phagophore assembly site (PAS) that is involved in autophagosome formation. Required for membrane expansion during autophagy and the CVT pathway. Required for sporulation. Has a role late in meiosis following DNA replication. This is Trafficking protein particle complex III-specific subunit 85 (TRS85) from Saccharomyces cerevisiae (strain ATCC 204508 / S288c) (Baker's yeast).